Here is a 241-residue protein sequence, read N- to C-terminus: Pyridoxine 5'-phosphate synthase (241 aa).

N10 is a 3-amino-2-oxopropyl phosphate binding site. Residue 12-13 (DH) coordinates 1-deoxy-D-xylulose 5-phosphate. R21 provides a ligand contact to 3-amino-2-oxopropyl phosphate. The Proton acceptor role is filled by H48. 1-deoxy-D-xylulose 5-phosphate-binding residues include R50 and H55. E75 serves as the catalytic Proton acceptor. 1-deoxy-D-xylulose 5-phosphate is bound at residue T105. Catalysis depends on H195, which acts as the Proton donor. 3-amino-2-oxopropyl phosphate contacts are provided by residues G196 and 217–218 (GH).

It belongs to the PNP synthase family. In terms of assembly, homooctamer; tetramer of dimers.

The protein localises to the cytoplasm. It catalyses the reaction 3-amino-2-oxopropyl phosphate + 1-deoxy-D-xylulose 5-phosphate = pyridoxine 5'-phosphate + phosphate + 2 H2O + H(+). It functions in the pathway cofactor biosynthesis; pyridoxine 5'-phosphate biosynthesis; pyridoxine 5'-phosphate from D-erythrose 4-phosphate: step 5/5. Its function is as follows. Catalyzes the complicated ring closure reaction between the two acyclic compounds 1-deoxy-D-xylulose-5-phosphate (DXP) and 3-amino-2-oxopropyl phosphate (1-amino-acetone-3-phosphate or AAP) to form pyridoxine 5'-phosphate (PNP) and inorganic phosphate. The protein is Pyridoxine 5'-phosphate synthase of Bdellovibrio bacteriovorus (strain ATCC 15356 / DSM 50701 / NCIMB 9529 / HD100).